We begin with the raw amino-acid sequence, 290 residues long: 4-hydroxy-tetrahydrodipicolinate synthase (290 aa).

A pyruvate-binding site is contributed by Thr-46. Tyr-134 acts as the Proton donor/acceptor in catalysis. The Schiff-base intermediate with substrate role is filled by Lys-163. Val-205 serves as a coordination point for pyruvate.

It belongs to the DapA family. Homotetramer; dimer of dimers.

The protein resides in the cytoplasm. It catalyses the reaction L-aspartate 4-semialdehyde + pyruvate = (2S,4S)-4-hydroxy-2,3,4,5-tetrahydrodipicolinate + H2O + H(+). It participates in amino-acid biosynthesis; L-lysine biosynthesis via DAP pathway; (S)-tetrahydrodipicolinate from L-aspartate: step 3/4. In terms of biological role, catalyzes the condensation of (S)-aspartate-beta-semialdehyde [(S)-ASA] and pyruvate to 4-hydroxy-tetrahydrodipicolinate (HTPA). The chain is 4-hydroxy-tetrahydrodipicolinate synthase from Bacillus subtilis (strain 168).